We begin with the raw amino-acid sequence, 147 residues long: Large ribosomal subunit protein uL15 (147 aa).

Residues 1 to 57 are disordered; it reads MRLEDLRPTPGSMKKRKRVGRGPGSGHGKTSGRGHKGQKARGTGKVHPWFEGGQTPL. The segment covering 30 to 44 has biased composition (basic residues); that stretch reads TSGRGHKGQKARGTG.

Belongs to the universal ribosomal protein uL15 family. Part of the 50S ribosomal subunit.

Binds to the 23S rRNA. The polypeptide is Large ribosomal subunit protein uL15 (Thermotoga neapolitana (strain ATCC 49049 / DSM 4359 / NBRC 107923 / NS-E)).